A 117-amino-acid polypeptide reads, in one-letter code: Protein OPG035 (117 aa).

Belongs to the poxviridae OPG035 family.

In terms of biological role, bcl-2-like protein which contributes to virulence by preventing host NF-kappa-B activation in response to pro-inflammatory stimuli such as TNF-alpha or IL1B. The polypeptide is Protein OPG035 (OPG035) (Monkeypox virus).